Consider the following 400-residue polypeptide: Putative niacin/nicotinamide transporter NiaP (400 aa).

At 1–14 the chain is on the cytoplasmic side; sequence MGKQQPISQRKLLG. Residues 15–35 traverse the membrane as a helical segment; sequence VAGLGWLFDAMDVGILSFIIA. Topologically, residues 36–49 are extracellular; sequence ALHVEWNLSPEEMK. A helical membrane pass occupies residues 50–70; sequence WIGSVNSIGMAAGAFLFGLLA. Residues 71–77 are Cytoplasmic-facing; sequence DRIGRKK. 2 helical membrane-spanning segments follow: residues 78–98 and 99–119; these read VFIITLLCFSIGSGISAFVTS and LSAFLILRFVIGMGLGGELPV. At 120 to 142 the chain is on the cytoplasmic side; that stretch reads ASTLVSEAVVPEKRGRVIVLLES. Residues 143–163 traverse the membrane as a helical segment; sequence FWAVGWLAAALISYFVIPSFG. Residues 164-165 are Extracellular-facing; the sequence is WQ. A helical membrane pass occupies residues 166 to 186; sequence AALLLTALTAFYALYLRTSLP. The Cytoplasmic segment spans residues 187-217; that stretch reads DSPKYESLSAKKRSMWENVKSVWARQYIRPT. Residues 218–238 traverse the membrane as a helical segment; sequence VMLSIVWFCVVFSYYGMFLWL. Over 239–253 the chain is Extracellular; it reads PSVMLLKGFSMIQSF. Residues 254 to 274 traverse the membrane as a helical segment; the sequence is EYVLLMTLAQLPGYFSAAWLI. Over 275 to 280 the chain is Cytoplasmic; it reads EKAGRK. The chain crosses the membrane as a helical span at residues 281–301; the sequence is WILVVYLIGTAGSAYFFGTAD. Over 302-304 the chain is Extracellular; that stretch reads SLS. Residues 305-325 form a helical membrane-spanning segment; it reads LLLTAGVLLSFFNLGAWGVLY. Residues 326–343 lie on the Cytoplasmic side of the membrane; sequence AYTPEQYPTAIRATGSGT. A helical transmembrane segment spans residues 344–364; the sequence is TAAFGRIGGIFGPLLVGTLAA. Topologically, residues 365 to 370 are extracellular; sequence RHISFS. The helical transmembrane segment at 371 to 391 threads the bilayer; that stretch reads VIFSIFCIAILLAVACILIMG. Over 392–400 the chain is Cytoplasmic; sequence KETKQTELE.

This sequence belongs to the major facilitator superfamily. Sugar transporter (TC 2.A.1.1) family.

It localises to the cell membrane. Probably involved in the uptake of amidated and deamidated forms of niacin. Increases the growth rate of E.coli that is unable to make niacin de novo; confers increased sensitivity to the toxic niacin analog 6-amino-nicotinamide to wild-type E.coli. There is probably another mechanism for niacin uptake. The protein is Putative niacin/nicotinamide transporter NiaP of Bacillus subtilis (strain 168).